We begin with the raw amino-acid sequence, 96 residues long: ESAT-6-like protein EsxR (96 aa).

This sequence belongs to the WXG100 family. ESAT-6 subfamily.

Its subcellular location is the secreted. This Mycobacterium leprae (strain TN) protein is ESAT-6-like protein EsxR.